Consider the following 385-residue polypeptide: 1-deoxy-D-xylulose 5-phosphate reductoisomerase (385 aa).

The NADPH site is built by Thr13, Gly14, Ser15, Ile16, Asn40, and Asn122. A 1-deoxy-D-xylulose 5-phosphate-binding site is contributed by Lys123. Residue Glu124 coordinates NADPH. Asp148 is a binding site for Mn(2+). Residues Ser149, Glu150, Ser177, and His200 each coordinate 1-deoxy-D-xylulose 5-phosphate. Glu150 serves as a coordination point for Mn(2+). Position 206 (Gly206) interacts with NADPH. Residues Ser213, Asn218, Lys219, and Glu222 each coordinate 1-deoxy-D-xylulose 5-phosphate. Glu222 provides a ligand contact to Mn(2+).

This sequence belongs to the DXR family. Requires Mg(2+) as cofactor. The cofactor is Mn(2+).

It catalyses the reaction 2-C-methyl-D-erythritol 4-phosphate + NADP(+) = 1-deoxy-D-xylulose 5-phosphate + NADPH + H(+). It functions in the pathway isoprenoid biosynthesis; isopentenyl diphosphate biosynthesis via DXP pathway; isopentenyl diphosphate from 1-deoxy-D-xylulose 5-phosphate: step 1/6. Functionally, catalyzes the NADPH-dependent rearrangement and reduction of 1-deoxy-D-xylulose-5-phosphate (DXP) to 2-C-methyl-D-erythritol 4-phosphate (MEP). This chain is 1-deoxy-D-xylulose 5-phosphate reductoisomerase, found in Francisella tularensis subsp. tularensis (strain WY96-3418).